The chain runs to 658 residues: MTATIIAAITITTIVIITPMEEITTMTIPMEEITTMTIPMEEITTMTIPMEEITTMTTPMEEITTITTPMEETTTITPMVETTTILPMAAMTTPMVETTTIPTVETTTTPMVETTTITPMVETTTITPMVEAMITLMEETMTTPMEETTTILPMAAMTTPMEETTTTTPMVETTTIPTVETMTTPMVEAMTILPMAAMTTPMEETTTTPMEETTTTPMVETMITPMVEAMTTPTEVVGRSMVSTIRTTTPMEAMITPTVETTTLPTAAMTTPVEETTTTPMVETMITPTVVTTTTPMVETMITPTVVTTTPMVILVMAVVMETTINIVGNNDSIPSQNFKSGKTFVSNANSSNSNDGSSSKSLDVGSFVNAFKQLNVNDNSSNNNSSGNTDSSTIGYAAVFAAAGKFFSQHSCDLASGNKSAQEGQNQFLSMVESEAKNLMNKTNYSANQSQNGNSQNSGNPVSQAIDLAKSLFQNRNLLTKLAQSGVLTNAAQGSSGGLSAAAVSGLIGSFMGSSSNNSNSSNNNSNTSNNNSNTSNNESMVSKLSSLSGMASSFLGSSGNNNNNNNSNSGNYNNNNSGNNNQQHQQSSSSLQGLASSFLNSSSGNSNKQNYNNNNNQNYGNNNNQNYNNNNNSSQGGNSQGGSGLLGQAVNMFLKS.

The span at 516-639 shows a compositional bias: low complexity; that stretch reads SSNNSNSSNN…NNNNNSSQGG (124 aa). The tract at residues 516–646 is disordered; it reads SSNNSNSSNN…QGGNSQGGSG (131 aa).

It localises to the cytoplasm. This is an uncharacterized protein from Schizosaccharomyces pombe (strain 972 / ATCC 24843) (Fission yeast).